Reading from the N-terminus, the 539-residue chain is uncharacterized protein (539 aa).

A disordered region spans residues 34 to 63 (AASEVSPIPQERPTTSLRKPTPRVQRPATD). The next 11 helical transmembrane spans lie at 103–123 (FATP…TTVF), 141–161 (MTAT…LDTV), 184–204 (ILLL…GILL), 244–264 (GIFH…IFLN), 277–299 (FLGA…IIYI), 325–345 (LAVP…LVTF), 360–380 (VLST…AAAA), 399–419 (THVS…ILFL), 434–454 (VVAL…ADNT), 470–490 (IGGV…AIIL), and 496–516 (WGLY…AGVE).

This sequence belongs to the multi antimicrobial extrusion (MATE) (TC 2.A.66.1) family.

Its subcellular location is the vacuole membrane. This is an uncharacterized protein from Schizosaccharomyces pombe (strain 972 / ATCC 24843) (Fission yeast).